The chain runs to 566 residues: Proline--tRNA ligase 1 (566 aa).

The protein belongs to the class-II aminoacyl-tRNA synthetase family. ProS type 1 subfamily. Homodimer.

It is found in the cytoplasm. It catalyses the reaction tRNA(Pro) + L-proline + ATP = L-prolyl-tRNA(Pro) + AMP + diphosphate. Its function is as follows. Catalyzes the attachment of proline to tRNA(Pro) in a two-step reaction: proline is first activated by ATP to form Pro-AMP and then transferred to the acceptor end of tRNA(Pro). As ProRS can inadvertently accommodate and process non-cognate amino acids such as alanine and cysteine, to avoid such errors it has two additional distinct editing activities against alanine. One activity is designated as 'pretransfer' editing and involves the tRNA(Pro)-independent hydrolysis of activated Ala-AMP. The other activity is designated 'posttransfer' editing and involves deacylation of mischarged Ala-tRNA(Pro). The misacylated Cys-tRNA(Pro) is not edited by ProRS. In Bacillus thuringiensis subsp. konkukian (strain 97-27), this protein is Proline--tRNA ligase 1.